A 692-amino-acid polypeptide reads, in one-letter code: Methionine--tRNA ligase (692 aa).

The short motif at 12-22 is the 'HIGH' region element; that stretch reads PYANGSFHIGH. Zn(2+) contacts are provided by Cys143, Cys146, Cys156, and Cys159. Residues 341–345 carry the 'KMSKS' region motif; it reads KMSKS. Lys344 contacts ATP. A tRNA-binding domain is found at 586 to 692; the sequence is DFAKIDLRIA…PGAQPGMRVR (107 aa).

It belongs to the class-I aminoacyl-tRNA synthetase family. MetG type 1 subfamily. In terms of assembly, homodimer. The cofactor is Zn(2+).

It localises to the cytoplasm. The enzyme catalyses tRNA(Met) + L-methionine + ATP = L-methionyl-tRNA(Met) + AMP + diphosphate. In terms of biological role, is required not only for elongation of protein synthesis but also for the initiation of all mRNA translation through initiator tRNA(fMet) aminoacylation. The sequence is that of Methionine--tRNA ligase from Bordetella parapertussis (strain 12822 / ATCC BAA-587 / NCTC 13253).